The sequence spans 689 residues: Glycine--tRNA ligase beta subunit (689 aa).

It belongs to the class-II aminoacyl-tRNA synthetase family. Tetramer of two alpha and two beta subunits.

It localises to the cytoplasm. The enzyme catalyses tRNA(Gly) + glycine + ATP = glycyl-tRNA(Gly) + AMP + diphosphate. In Pasteurella multocida (strain Pm70), this protein is Glycine--tRNA ligase beta subunit (glyS).